The primary structure comprises 231 residues: Glutathione-S-transferase (231 aa).

The region spanning 15 to 98 (LFAVKGTATS…YIADAYDKDG (84 aa)) is the GST N-terminal domain.

The protein belongs to the GST superfamily.

It catalyses the reaction RX + glutathione = an S-substituted glutathione + a halide anion + H(+). In terms of biological role, conjugation of reduced glutathione to a wide number of exogenous and endogenous hydrophobic electrophiles. In Alternaria alternata (Alternaria rot fungus), this protein is Glutathione-S-transferase.